The chain runs to 135 residues: Global transcriptional regulator Spx 2 (135 aa).

Residue Cys10 is part of the active site.

Belongs to the ArsC family. Spx subfamily. Interacts with the C-terminal domain of the alpha subunit of the RNAP.

It is found in the cytoplasm. In terms of biological role, global transcriptional regulator that plays a key role in stress response and exerts either positive or negative regulation of genes. Acts by interacting with the C-terminal domain of the alpha subunit of the RNA polymerase (RNAP). This interaction can enhance binding of RNAP to the promoter region of target genes and stimulate their transcription, or block interaction of RNAP with activator. In Oceanobacillus iheyensis (strain DSM 14371 / CIP 107618 / JCM 11309 / KCTC 3954 / HTE831), this protein is Global transcriptional regulator Spx 2.